The primary structure comprises 361 residues: Methyltransferase LUC1 (361 aa).

S-adenosyl-L-homocysteine-binding residues include tyrosine 18, asparagine 66, aspartate 89, serine 126, and phenylalanine 127. 2 residues coordinate Mg(2+): glutamine 156 and phenylalanine 233.

The protein belongs to the methyltransferase superfamily. Type-7 methyltransferase family. It depends on Mg(2+) as a cofactor.

Its pathway is mycotoxin biosynthesis. Its function is as follows. Methyltransferase; part of the gene cluster that mediates the biosynthesis of the mycotoxin lucilactaene and the lucilactaene-related compound NG-391 that act as cell cycle inhibitors with potent growth inhibitory activity against malarial parasites, moderate growth inhibitory activity against cancer cells, and no activity against bacteria and fungi. LUC1 performs the last step of the pathway and methylates the hydroxyl group of demethyllucilactaene at C-21 to yeald lucilactaene. The pathway begins with the hybrid PKS-NRPS synthetase LUC5 which is responsible for the condensation of one acetyl-coenzyme A (CoA) unit with six malonyl-CoA units and the amide linkage of the arising heptaketide and homoserine, subsequently releasing the first intermediate prelucilactaene B. Both the cytochrome P450 monooxygenase LUC2 and the hydrolase LUC6 function in parallel in modification of prelucilactaene B. LUC6 may catalyze the 2-pyrrolidone ring formation to form prelucilactaene C from prelucilactaene B, followed by C-15 hydroxylation by the same enzyme to give prelucilactaene D, which is then converted to prelucilactaene E by epoxidation, and finally to prelucilactaene F by cyclization. Prelucilactane D, prelucilactaene E, and prelucilactaene F can be converted to dihydrolucilactaene, NG391, and lucilactaene, respectively, via C-20 methyl group hydroxylation by the cytochrome P450 monooxygenase LUC2. However, LUC2, unlike FUS8 in fusarin C biosynthesis, is not enough for the full oxidation of the C-20 methyl group into carboxylic acid, which is a prerequisite for the final methylation step. The aldehyde dehydrogenase LUC3 is involved in the biosynthesis by further oxidation of the C-20 alcoholic analog prelucilactaene G into a carboxylic derivative. This unidentified carboxylic derivative may be converted to demethyllucilactaene. As the last step, the methyltransferase LUC1 methylates the hydroxyl group at C-21 of demethyllucilactaene to generate lucilactaene. This Fusarium sp protein is Methyltransferase LUC1.